The chain runs to 324 residues: Succinylglutamate desuccinylase (324 aa).

Residues His53, Glu56, and His148 each coordinate Zn(2+). Glu211 is an active-site residue.

It belongs to the AspA/AstE family. Succinylglutamate desuccinylase subfamily. Zn(2+) is required as a cofactor.

The catalysed reaction is N-succinyl-L-glutamate + H2O = L-glutamate + succinate. Its pathway is amino-acid degradation; L-arginine degradation via AST pathway; L-glutamate and succinate from L-arginine: step 5/5. Transforms N(2)-succinylglutamate into succinate and glutamate. The chain is Succinylglutamate desuccinylase from Acinetobacter baumannii (strain SDF).